The primary structure comprises 307 residues: Coproporphyrin III ferrochelatase (307 aa).

Fe-coproporphyrin III-binding positions include Tyr12, Arg29, 45-46, Ser53, and Tyr124; that span reads RY. Fe(2+)-binding residues include His181 and Glu263.

This sequence belongs to the ferrochelatase family.

It localises to the cytoplasm. It carries out the reaction Fe-coproporphyrin III + 2 H(+) = coproporphyrin III + Fe(2+). The protein operates within porphyrin-containing compound metabolism; protoheme biosynthesis. Its function is as follows. Involved in coproporphyrin-dependent heme b biosynthesis. Catalyzes the insertion of ferrous iron into coproporphyrin III to form Fe-coproporphyrin III. This is Coproporphyrin III ferrochelatase from Staphylococcus epidermidis (strain ATCC 12228 / FDA PCI 1200).